We begin with the raw amino-acid sequence, 231 residues long: Cytidylate kinase (231 aa).

Residue glycine 17–threonine 25 coordinates ATP.

It belongs to the cytidylate kinase family. Type 1 subfamily.

It localises to the cytoplasm. The enzyme catalyses CMP + ATP = CDP + ADP. The catalysed reaction is dCMP + ATP = dCDP + ADP. The polypeptide is Cytidylate kinase (Ralstonia pickettii (strain 12J)).